Consider the following 429-residue polypeptide: Cell wall protein ECM33 (429 aa).

A signal peptide spans 1–19 (MQFKNALTATAILSASALA). Asparagine 21, asparagine 56, asparagine 82, asparagine 196, asparagine 209, asparagine 227, asparagine 234, asparagine 241, asparagine 267, asparagine 279, asparagine 304, and asparagine 328 each carry an N-linked (GlcNAc...) asparagine glycan. Serine 339 bears the Phosphoserine mark. Residues 361–401 (LSSTSTESSKSSATSSASSSGDASNAQASVSASASSSSSSS) are compositionally biased toward low complexity. The tract at residues 361-410 (LSSTSTESSKSSATSSASSSGDASNAQASVSASASSSSSSSKKSKGAAPE) is disordered. Residue glycine 406 is the site of GPI-anchor amidated glycine attachment. Positions 407-429 (AAPELVPATSFMGVVAAVAVALL) are cleaved as a propeptide — removed in mature form.

The protein belongs to the SPS2 family. Post-translationally, the GPI-anchor is attached to the protein in the endoplasmic reticulum and serves to target the protein to the cell surface. There, the glucosamine-inositol phospholipid moiety is cleaved off and the GPI-modified mannoprotein is covalently attached via its lipidless GPI glycan remnant to the 1,6-beta-glucan of the outer cell wall layer.

The protein resides in the cell membrane. The protein localises to the secreted. Its subcellular location is the cell wall. Required for proper cell wall integrity and for the correct assembly of the mannoprotein outer layer of the cell wall. Important for apical bud growth. The protein is Cell wall protein ECM33 (ECM33) of Saccharomyces cerevisiae (strain YJM789) (Baker's yeast).